A 205-amino-acid chain; its full sequence is Holliday junction branch migration complex subunit RuvA (205 aa).

Residues M1–I64 form a domain I region. Residues T65–E143 form a domain II region. Residues R144 to P156 form a flexible linker region. A domain III region spans residues V157 to L205.

Belongs to the RuvA family. As to quaternary structure, homotetramer. Forms an RuvA(8)-RuvB(12)-Holliday junction (HJ) complex. HJ DNA is sandwiched between 2 RuvA tetramers; dsDNA enters through RuvA and exits via RuvB. An RuvB hexamer assembles on each DNA strand where it exits the tetramer. Each RuvB hexamer is contacted by two RuvA subunits (via domain III) on 2 adjacent RuvB subunits; this complex drives branch migration. In the full resolvosome a probable DNA-RuvA(4)-RuvB(12)-RuvC(2) complex forms which resolves the HJ.

The protein localises to the cytoplasm. Functionally, the RuvA-RuvB-RuvC complex processes Holliday junction (HJ) DNA during genetic recombination and DNA repair, while the RuvA-RuvB complex plays an important role in the rescue of blocked DNA replication forks via replication fork reversal (RFR). RuvA specifically binds to HJ cruciform DNA, conferring on it an open structure. The RuvB hexamer acts as an ATP-dependent pump, pulling dsDNA into and through the RuvAB complex. HJ branch migration allows RuvC to scan DNA until it finds its consensus sequence, where it cleaves and resolves the cruciform DNA. This Shewanella woodyi (strain ATCC 51908 / MS32) protein is Holliday junction branch migration complex subunit RuvA.